We begin with the raw amino-acid sequence, 254 residues long: Serotonin N-acetyltransferase 1, chloroplastic (254 aa).

The transit peptide at M1 to S83 directs the protein to the chloroplast. Residues V119–F254 enclose the N-acetyltransferase domain.

It is found in the plastid. The protein resides in the chloroplast. It localises to the nucleus. It carries out the reaction a 2-arylethylamine + acetyl-CoA = an N-acetyl-2-arylethylamine + CoA + H(+). It functions in the pathway aromatic compound metabolism; melatonin biosynthesis; melatonin from serotonin: step 1/2. Functionally, catalyzes the N-acetylation of serotonin into N-acetylserotonin, the penultimate step in the synthesis of melatonin. Catalyzes in vitro the N-acetylation of tryptamine to produce N-acetyltryptamine, 5-methoxytryptamine to produce melatonin and tyramine to produce N-acetyltyramine. Acetyltransferase required for geminivirus infection and systemic spread. The protein is Serotonin N-acetyltransferase 1, chloroplastic of Oryza sativa subsp. indica (Rice).